The following is a 140-amino-acid chain: RxLR effector protein CRE9 (140 aa).

The N-terminal stretch at 1–24 is a signal peptide; it reads MRTSVFVALVVATFVATCISFTSA. The RxLR-dEER signature appears at 43-61; that stretch reads RTLAEADDWWLASTNTEER. A helical membrane pass occupies residues 119–139; that stretch reads LKILYGALLAGLIIVGVEAML.

It belongs to the RxLR effector family.

The protein resides in the secreted. It localises to the host cell. The protein localises to the membrane. Functionally, effector that is involved in host plant infection. Contributes to virulence during the early infection stage, by inhibiting plant defense responses induced by both PAMP-triggered immunity (PTI) and effector-triggered immunity (ETI). In Phytophthora infestans (strain T30-4) (Potato late blight agent), this protein is RxLR effector protein CRE9.